The following is a 129-amino-acid chain: L-ectoine synthase (129 aa).

The protein belongs to the ectoine synthase family.

It carries out the reaction (2S)-4-acetamido-2-aminobutanoate = L-ectoine + H2O. It functions in the pathway amine and polyamine biosynthesis; ectoine biosynthesis; L-ectoine from L-aspartate 4-semialdehyde: step 3/3. Catalyzes the circularization of gamma-N-acetyl-alpha,gamma-diaminobutyric acid (ADABA) to ectoine (1,4,5,6-tetrahydro-2-methyl-4-pyrimidine carboxylic acid), which is an excellent osmoprotectant. The chain is L-ectoine synthase from Marinomonas sp. (strain MWYL1).